Here is a 503-residue protein sequence, read N- to C-terminus: Cytochrome P450 3A8 (503 aa).

Cysteine 442 lines the heme pocket.

Belongs to the cytochrome P450 family. It depends on heme as a cofactor.

It localises to the endoplasmic reticulum membrane. The protein resides in the microsome membrane. The catalysed reaction is an organic molecule + reduced [NADPH--hemoprotein reductase] + O2 = an alcohol + oxidized [NADPH--hemoprotein reductase] + H2O + H(+). Functionally, catalyzes nifedipine and nilvadipine oxidations. This is Cytochrome P450 3A8 (CYP3A8) from Macaca fascicularis (Crab-eating macaque).